Consider the following 306-residue polypeptide: Pantothenate kinase (306 aa).

91–98 lines the ATP pocket; sequence GSVAVGKS.

Belongs to the prokaryotic pantothenate kinase family.

The protein localises to the cytoplasm. It carries out the reaction (R)-pantothenate + ATP = (R)-4'-phosphopantothenate + ADP + H(+). It participates in cofactor biosynthesis; coenzyme A biosynthesis; CoA from (R)-pantothenate: step 1/5. In Streptococcus pneumoniae serotype 4 (strain ATCC BAA-334 / TIGR4), this protein is Pantothenate kinase (coaA).